Reading from the N-terminus, the 202-residue chain is LexA repressor (202 aa).

Residues 28-48 (QQEIARAFGFRSLGTVRNYLV) constitute a DNA-binding region (H-T-H motif). Residues serine 120 and lysine 157 each act as for autocatalytic cleavage activity in the active site.

It belongs to the peptidase S24 family. In terms of assembly, homodimer.

The catalysed reaction is Hydrolysis of Ala-|-Gly bond in repressor LexA.. Functionally, represses a number of genes involved in the response to DNA damage (SOS response), including recA and lexA. In the presence of single-stranded DNA, RecA interacts with LexA causing an autocatalytic cleavage which disrupts the DNA-binding part of LexA, leading to derepression of the SOS regulon and eventually DNA repair. The sequence is that of LexA repressor from Syntrophotalea carbinolica (strain DSM 2380 / NBRC 103641 / GraBd1) (Pelobacter carbinolicus).